A 510-amino-acid chain; its full sequence is ATP synthase subunit alpha (510 aa).

169-176 (GDRQTGKT) provides a ligand contact to ATP.

The protein belongs to the ATPase alpha/beta chains family. F-type ATPases have 2 components, CF(1) - the catalytic core - and CF(0) - the membrane proton channel. CF(1) has five subunits: alpha(3), beta(3), gamma(1), delta(1), epsilon(1). CF(0) has three main subunits: a(1), b(2) and c(9-12). The alpha and beta chains form an alternating ring which encloses part of the gamma chain. CF(1) is attached to CF(0) by a central stalk formed by the gamma and epsilon chains, while a peripheral stalk is formed by the delta and b chains.

Its subcellular location is the cell inner membrane. The enzyme catalyses ATP + H2O + 4 H(+)(in) = ADP + phosphate + 5 H(+)(out). In terms of biological role, produces ATP from ADP in the presence of a proton gradient across the membrane. The alpha chain is a regulatory subunit. This chain is ATP synthase subunit alpha, found in Rickettsia felis (strain ATCC VR-1525 / URRWXCal2) (Rickettsia azadi).